The sequence spans 717 residues: Glycine--tRNA ligase beta subunit (717 aa).

It belongs to the class-II aminoacyl-tRNA synthetase family. Tetramer of two alpha and two beta subunits.

The protein localises to the cytoplasm. The catalysed reaction is tRNA(Gly) + glycine + ATP = glycyl-tRNA(Gly) + AMP + diphosphate. This Gloeothece citriformis (strain PCC 7424) (Cyanothece sp. (strain PCC 7424)) protein is Glycine--tRNA ligase beta subunit.